We begin with the raw amino-acid sequence, 449 residues long: Probable glycine dehydrogenase (decarboxylating) subunit 1 (449 aa).

Belongs to the GcvP family. N-terminal subunit subfamily. In terms of assembly, the glycine cleavage system is composed of four proteins: P, T, L and H. In this organism, the P 'protein' is a heterodimer of two subunits.

It carries out the reaction N(6)-[(R)-lipoyl]-L-lysyl-[glycine-cleavage complex H protein] + glycine + H(+) = N(6)-[(R)-S(8)-aminomethyldihydrolipoyl]-L-lysyl-[glycine-cleavage complex H protein] + CO2. Functionally, the glycine cleavage system catalyzes the degradation of glycine. The P protein binds the alpha-amino group of glycine through its pyridoxal phosphate cofactor; CO(2) is released and the remaining methylamine moiety is then transferred to the lipoamide cofactor of the H protein. The protein is Probable glycine dehydrogenase (decarboxylating) subunit 1 of Rhodospirillum centenum (strain ATCC 51521 / SW).